We begin with the raw amino-acid sequence, 378 residues long: MLSPTLELACDLIRRPSVTPVDAGCQELMMARLANVGFALEQMRIENVDNFWASHGGNDGPVLCFAGHTDVVPTGPLQAWNIPPFDAFIDDQGMLHGRGAADMKGSLAAMLVAAERFVVDYPDHRGSVAFLITSDEEGPAHHGTKAVVERLVARQQRLDWCIVGEPSSTTLVGDIVKNGRRGSLGATLTLRGVQGHVAYPHLAKNPIHLLAPALAELVSEHWDSGNAFFPPTSFQVSNLNSGTGATNVIPGELVAVFNFRFSTESTVESLKSRVAEILDKHSLDWHIDWALSGLPFLTEPGALLDAVASSIKAVTGRDTQASTSGGTSDGRFIATMGTQVVELGPVNATIHQVNECILASDLDVLTEIYYETLIKLLA.

Histidine 68 is a Zn(2+) binding site. The active site involves aspartate 70. Aspartate 102 contacts Zn(2+). The Proton acceptor role is filled by glutamate 136. Zn(2+) is bound by residues glutamate 137, glutamate 165, and histidine 351.

Belongs to the peptidase M20A family. DapE subfamily. Homodimer. Requires Zn(2+) as cofactor. Co(2+) is required as a cofactor.

It catalyses the reaction N-succinyl-(2S,6S)-2,6-diaminopimelate + H2O = (2S,6S)-2,6-diaminopimelate + succinate. Its pathway is amino-acid biosynthesis; L-lysine biosynthesis via DAP pathway; LL-2,6-diaminopimelate from (S)-tetrahydrodipicolinate (succinylase route): step 3/3. Its function is as follows. Catalyzes the hydrolysis of N-succinyl-L,L-diaminopimelic acid (SDAP), forming succinate and LL-2,6-diaminopimelate (DAP), an intermediate involved in the bacterial biosynthesis of lysine and meso-diaminopimelic acid, an essential component of bacterial cell walls. This is Succinyl-diaminopimelate desuccinylase from Pseudomonas syringae pv. syringae.